The following is a 120-amino-acid chain: NAD(P)H-quinone oxidoreductase subunit 3, chloroplastic (120 aa).

The next 3 helical transmembrane spans lie at 9-29, 64-84, and 88-108; these read IFWA…FISG, MFAL…PWAM, and VLGV…ILGL.

It belongs to the complex I subunit 3 family. As to quaternary structure, NDH is composed of at least 16 different subunits, 5 of which are encoded in the nucleus.

It localises to the plastid. The protein localises to the chloroplast thylakoid membrane. The enzyme catalyses a plastoquinone + NADH + (n+1) H(+)(in) = a plastoquinol + NAD(+) + n H(+)(out). The catalysed reaction is a plastoquinone + NADPH + (n+1) H(+)(in) = a plastoquinol + NADP(+) + n H(+)(out). In terms of biological role, NDH shuttles electrons from NAD(P)H:plastoquinone, via FMN and iron-sulfur (Fe-S) centers, to quinones in the photosynthetic chain and possibly in a chloroplast respiratory chain. The immediate electron acceptor for the enzyme in this species is believed to be plastoquinone. Couples the redox reaction to proton translocation, and thus conserves the redox energy in a proton gradient. This chain is NAD(P)H-quinone oxidoreductase subunit 3, chloroplastic, found in Barbarea verna (Land cress).